Reading from the N-terminus, the 337-residue chain is MTQVFQGRNFLAEKDFTREEFEYLIDFAAHLKDLKKRGVPHRYLEGKNIALLFEKTSTRTRAAFTTAAIDLGAHPEYLGANDIQLGKKESTEDTAKVLGRMFDGIEFRGFSQRMVEELGEFAGVPVWNGLTDEWHPTQMLADYLTVKENFGKLEGITLVYCGDGRNNVANSLLVAGTLMGVNVHIFSPKELFPDEEIVKLAEGFAKESGAHILVTDNADEAVKGADVLYTDVWVSMGEEDKFKERVELLQPYQVNMDLVKKANNENLIFLHCLPAFHDTNTVYGKDVADKYGVSEMEVTDEVFRSKYARHFDQAENRMHTIKAVMAATLGNLFIPKV.

Residues 57 to 60, Q84, R108, and 135 to 138 contribute to the carbamoyl phosphate site; these read STRT and HPTQ. L-ornithine-binding positions include N167, D231, and 235–236; that span reads SM. Residues 272-273 and R317 contribute to the carbamoyl phosphate site; that span reads CL.

The protein belongs to the aspartate/ornithine carbamoyltransferase superfamily. OTCase family.

It is found in the cytoplasm. The enzyme catalyses carbamoyl phosphate + L-ornithine = L-citrulline + phosphate + H(+). It participates in amino-acid degradation; L-arginine degradation via ADI pathway; carbamoyl phosphate from L-arginine: step 2/2. Its function is as follows. Reversibly catalyzes the transfer of the carbamoyl group from carbamoyl phosphate (CP) to the N(epsilon) atom of ornithine (ORN) to produce L-citrulline. The chain is Ornithine carbamoyltransferase from Streptococcus uberis (strain ATCC BAA-854 / 0140J).